Here is a 142-residue protein sequence, read N- to C-terminus: uncharacterized protein (142 aa).

Helical transmembrane passes span 75–97 (VFFR…YIVA) and 107–124 (LSIV…KLFY).

It is found in the cell membrane. This is an uncharacterized protein from Archaeoglobus fulgidus (strain ATCC 49558 / DSM 4304 / JCM 9628 / NBRC 100126 / VC-16).